A 139-amino-acid polypeptide reads, in one-letter code: Large ribosomal subunit protein uL16c (139 aa).

This sequence belongs to the universal ribosomal protein uL16 family. As to quaternary structure, part of the 50S ribosomal subunit.

The protein resides in the plastid. Its subcellular location is the chloroplast. This chain is Large ribosomal subunit protein uL16c, found in Cryptomeria japonica (Japanese cedar).